The sequence spans 301 residues: uncharacterized protein (301 aa).

A signal peptide spans 1–28 (MFFREDKSVAFRLRSAALSGCATGQSDA).

This is an uncharacterized protein from Treponema pallidum (strain Nichols).